Consider the following 168-residue polypeptide: Dihydrofolate reductase (168 aa).

Residues 1 to 159 (MISFIFAMDA…YDYEFLMYEK (159 aa)) form the DHFR domain. 5–7 (IFA) serves as a coordination point for substrate. Residues 6–7 (FA) and 14–19 (IGKDND) each bind NADP(+). Substrate is bound at residue D27. Residue 43-46 (GRKT) participates in NADP(+) binding. R57 contributes to the substrate binding site. NADP(+) is bound by residues 62–65 (VTSA) and 95–100 (IGGAQL). T114 contacts substrate.

Belongs to the dihydrofolate reductase family.

It catalyses the reaction (6S)-5,6,7,8-tetrahydrofolate + NADP(+) = 7,8-dihydrofolate + NADPH + H(+). Its pathway is cofactor biosynthesis; tetrahydrofolate biosynthesis; 5,6,7,8-tetrahydrofolate from 7,8-dihydrofolate: step 1/1. In terms of biological role, key enzyme in folate metabolism. Catalyzes an essential reaction for de novo glycine and purine synthesis, and for DNA precursor synthesis. In Bacillus subtilis (strain 168), this protein is Dihydrofolate reductase (dfrA).